The primary structure comprises 809 residues: TPR repeat-containing protein TP_0920 (809 aa).

The interval 103–125 is disordered; sequence PGEARALPNSEQPEVPASLDSTS. TPR repeat units lie at residues 315 to 348, 383 to 416, 418 to 450, 471 to 504, 513 to 550, 552 to 582, 583 to 616, 656 to 689, and 723 to 756; these read LREYLLAGDIACAQHLYDEAEEAFNAALVQDPHC, AFLSNLCGHLALAQNRHEDAAAAYQRAFRLDPHQ, LFALHAAQELSLLGEKEQAIQAYLHAARLFLAQ, TEVRSIAGKLYYATGRHRQAHTQFDALCRAGSAD, LLLREAQGTHEHDAPAAAACEQRARDAFQRACALAPDC, LYHFKYAESLFLSEKDCDEPLARALALDPDN, GWLHNLCAQKALREQNFDAAAQSLQRARALLPHE, GQAFHLLANAFYADGCYEHAAPWYDKALREEPQN, and AHVYTLIALVAAQLGDFPRAELTLQEACTLWPQC.

This Treponema pallidum (strain Nichols) protein is TPR repeat-containing protein TP_0920.